A 101-amino-acid polypeptide reads, in one-letter code: ATP synthase subunit c (101 aa).

2 consecutive transmembrane segments (helical) span residues 28–48 and 72–92; these read SVVA…VGMG and MFIA…IALI.

The protein belongs to the ATPase C chain family. As to quaternary structure, F-type ATPases have 2 components, F(1) - the catalytic core - and F(0) - the membrane proton channel. F(1) has five subunits: alpha(3), beta(3), gamma(1), delta(1), epsilon(1). F(0) has three main subunits: a(1), b(2) and c(10-14). The alpha and beta chains form an alternating ring which encloses part of the gamma chain. F(1) is attached to F(0) by a central stalk formed by the gamma and epsilon chains, while a peripheral stalk is formed by the delta and b chains.

It is found in the cell inner membrane. In terms of biological role, f(1)F(0) ATP synthase produces ATP from ADP in the presence of a proton or sodium gradient. F-type ATPases consist of two structural domains, F(1) containing the extramembraneous catalytic core and F(0) containing the membrane proton channel, linked together by a central stalk and a peripheral stalk. During catalysis, ATP synthesis in the catalytic domain of F(1) is coupled via a rotary mechanism of the central stalk subunits to proton translocation. Its function is as follows. Key component of the F(0) channel; it plays a direct role in translocation across the membrane. A homomeric c-ring of between 10-14 subunits forms the central stalk rotor element with the F(1) delta and epsilon subunits. This is ATP synthase subunit c from Sulfurovum sp. (strain NBC37-1).